The primary structure comprises 1222 residues: Kinesin-related protein 9 (1222 aa).

Positions 1-25 (MDNNNNNFSTPKQPTINSTTGGQLR) are enriched in polar residues. Disordered regions lie at residues 1 to 55 (MDNN…ITNS), 75 to 165 (MDSL…STNI), and 188 to 343 (SSNT…TQPL). The span at 26–55 (SRSNSSPSTSSISTPRNGSTTATTSSITNS) shows a compositional bias: low complexity. Over residues 75–85 (MDSLSTPMSQS) the composition is skewed to polar residues. Low complexity-rich tracts occupy residues 122–165 (SFIS…STNI), 194–209 (SSLPSSTNNGNNPLSN), 216–238 (NHHLVNSNSSTSTPSPTMFISTT), and 254–325 (NLTT…RTPI). Residues 326 to 343 (QNFNSVGGVNITSKTQPL) are compositionally biased toward polar residues. One can recognise a Kinesin motor domain in the interval 350 to 719 (SIQAVCRFRP…LNFGQRAQSV (370 aa)). 438–445 (GQTGAGKT) provides a ligand contact to ATP. The stretch at 724 to 1026 (LQNVEESHSE…DTLTNKLEIQ (303 aa)) forms a coiled coil. A disordered region spans residues 1144-1174 (NINNNNNIKNNNNNNKLKSKKVGSSSSSSSN). Residues 1183 to 1203 (ILFFLIILVILFFLMVAVGLT) traverse the membrane as a helical segment.

Belongs to the TRAFAC class myosin-kinesin ATPase superfamily. Kinesin family.

Its subcellular location is the membrane. It is found in the cytoplasm. It localises to the cytoskeleton. Functionally, microtubule-associated force-producing protein that plays a role in organelle transport. Its motor activity is directed toward the microtubule's plus end. In Dictyostelium discoideum (Social amoeba), this protein is Kinesin-related protein 9 (kif9).